Reading from the N-terminus, the 60-residue chain is Single-pass membrane and coiled-coil domain-containing protein 4 homolog (60 aa).

A disordered region spans residues 1-21; it reads MRKLRGGQTKETRKQKQERRE. Residues 8–21 are compositionally biased toward basic and acidic residues; that stretch reads QTKETRKQKQERRE. Residues 10–33 adopt a coiled-coil conformation; that stretch reads KETRKQKQERREENLKIQQQLKTI. A helical membrane pass occupies residues 32–52; that stretch reads TIVLPICGVFLMCIVVYVFLK.

This sequence belongs to the SMCO4 family.

The protein resides in the membrane. The sequence is that of Single-pass membrane and coiled-coil domain-containing protein 4 homolog from Aedes aegypti (Yellowfever mosquito).